The primary structure comprises 273 residues: Formamidopyrimidine-DNA glycosylase (273 aa).

Proline 2 (schiff-base intermediate with DNA) is an active-site residue. The active-site Proton donor is glutamate 3. Lysine 59 functions as the Proton donor; for beta-elimination activity in the catalytic mechanism. DNA-binding residues include histidine 93, arginine 111, and arginine 154. The FPG-type zinc finger occupies 239–273 (KVYGRGGEPCKECGHTLVRIRLAGRSTVFCPCCQV). The active-site Proton donor; for delta-elimination activity is arginine 263.

The protein belongs to the FPG family. Monomer. Requires Zn(2+) as cofactor.

The catalysed reaction is Hydrolysis of DNA containing ring-opened 7-methylguanine residues, releasing 2,6-diamino-4-hydroxy-5-(N-methyl)formamidopyrimidine.. The enzyme catalyses 2'-deoxyribonucleotide-(2'-deoxyribose 5'-phosphate)-2'-deoxyribonucleotide-DNA = a 3'-end 2'-deoxyribonucleotide-(2,3-dehydro-2,3-deoxyribose 5'-phosphate)-DNA + a 5'-end 5'-phospho-2'-deoxyribonucleoside-DNA + H(+). Its function is as follows. Involved in base excision repair of DNA damaged by oxidation or by mutagenic agents. Acts as a DNA glycosylase that recognizes and removes damaged bases. Has a preference for oxidized purines, such as 7,8-dihydro-8-oxoguanine (8-oxoG). Has AP (apurinic/apyrimidinic) lyase activity and introduces nicks in the DNA strand. Cleaves the DNA backbone by beta-delta elimination to generate a single-strand break at the site of the removed base with both 3'- and 5'-phosphates. This is Formamidopyrimidine-DNA glycosylase from Desulfitobacterium hafniense (strain DSM 10664 / DCB-2).